An 824-amino-acid polypeptide reads, in one-letter code: Disintegrin and metalloproteinase domain-containing protein 8 (824 aa).

The signal sequence occupies residues 1–16 (MRGLGLWLLGAMMLPA). Residues 17 to 655 (IAPSRPWALM…EVHAASGSLP (639 aa)) are Extracellular-facing. Residues Asn-67 and Asn-91 are each glycosylated (N-linked (GlcNAc...) asparagine). The region spanning 200–400 (RYVELYVVVD…PQSVCLANAP (201 aa)) is the Peptidase M12B domain. Disulfide bonds link Cys-310/Cys-395, Cys-351/Cys-379, Cys-353/Cys-362, Cys-435/Cys-457, Cys-448/Cys-454, Cys-466/Cys-486, Cys-473/Cys-503, Cys-498/Cys-508, Cys-566/Cys-613, Cys-613/Cys-623, Cys-617/Cys-629, and Cys-631/Cys-640. His-334 serves as a coordination point for Zn(2+). Glu-335 is an active-site residue. Residues His-338 and His-344 each contribute to the Zn(2+) site. The 87-residue stretch at 408-494 (GPVCGNLFVE…ECPEDAFQEN (87 aa)) folds into the Disintegrin domain. Asn-436 carries N-linked (GlcNAc...) asparagine glycosylation. The EGF-like domain occupies 609-641 (RSSNCSAQCHNHGVCNHKQECHCHAGWAPPHCA). Asn-612 carries an N-linked (GlcNAc...) asparagine glycan. The helical transmembrane segment at 656–676 (VFVVVVLVLLAVVLVTLAGII) threads the bilayer. Residues 677-824 (VYRKARSRIL…KQGAGAPTAP (148 aa)) are Cytoplasmic-facing. Disordered stretches follow at residues 710–756 (VPAK…PVTV) and 776–824 (KPTF…PTAP). Residues 747–756 (RPPPAPPVTV) show a composition bias toward pro residues. A compositionally biased stretch (low complexity) spans 788–804 (PGAGAANPGPAEGAVGP).

As to quaternary structure, interacts with FST3. Zn(2+) is required as a cofactor. Expressed on neutrophils and monocytes.

The protein localises to the membrane. Functionally, possible involvement in extravasation of leukocytes. The polypeptide is Disintegrin and metalloproteinase domain-containing protein 8 (ADAM8) (Homo sapiens (Human)).